A 342-amino-acid chain; its full sequence is Protein RecA (342 aa).

Belongs to the RecA family.

Its subcellular location is the cytoplasm. In terms of biological role, can catalyze the hydrolysis of ATP in the presence of single-stranded DNA, the ATP-dependent uptake of single-stranded DNA by duplex DNA, and the ATP-dependent hybridization of homologous single-stranded DNAs. It interacts with LexA causing its activation and leading to its autocatalytic cleavage. This chain is Protein RecA, found in Pectobacterium carotovorum (Erwinia carotovora).